The chain runs to 359 residues: 4-galactosyl-N-acetylglucosaminide 3-alpha-L-fucosyltransferase 9 (359 aa).

Residues 1 to 11 are Cytoplasmic-facing; the sequence is MTSTSKGILRP. A helical; Signal-anchor for type II membrane protein membrane pass occupies residues 12 to 32; the sequence is FLIVCIILGCFMACLLIYIKP. The Lumenal portion of the chain corresponds to 33 to 359; it reads TNSWVFSPME…VGNLEKWFWN (327 aa). A glycan (N-linked (GlcNAc...) asparagine) is linked at N62. Residues 63–168 are acceptor-binding; it reads ETTILVWVWP…RRDSDIQVPY (106 aa). Residue Q75 participates in a beta-D-galactosyl-(1-&gt;4)-N-acetyl-beta-D-glucosaminyl derivative binding. 3 disulfides stabilise this stretch: C82–C335, C91–C338, and C190–C238. N101 carries an N-linked (GlcNAc...) asparagine glycan. A beta-D-galactosyl-(1-&gt;4)-N-acetyl-beta-D-glucosaminyl derivative is bound at residue E137. E137 serves as the catalytic Nucleophile. E137 lines the GDP-beta-L-fucose pocket. The N-linked (GlcNAc...) asparagine glycan is linked to N153. GDP-beta-L-fucose is bound by residues Y168, V192, S194, N195, R202, V226, Y241, N246, Y252, E255, and K256. The interval 169–326 is donor-binding; that stretch reads GFLTVSTNPF…NWRKDFTVNL (158 aa). Positions 327–359 are acceptor-binding; that stretch reads PRFWESHACLACDHVKRHQEYKSVGNLEKWFWN.

It belongs to the glycosyltransferase 10 family. Homodimer. In terms of processing, N-glycosylated with complex-type N-glycans. As to expression, mainly detected in brain and kidney.

It localises to the golgi apparatus. The protein resides in the trans-Golgi network membrane. It is found in the golgi apparatus membrane. The catalysed reaction is a beta-D-galactosyl-(1-&gt;4)-N-acetyl-beta-D-glucosaminyl derivative + GDP-beta-L-fucose = a beta-D-galactosyl-(1-&gt;4)-[alpha-L-fucosyl-(1-&gt;3)]-N-acetyl-beta-D-glucosaminyl derivative + GDP + H(+). It catalyses the reaction an alpha-Neu5Ac-(2-&gt;3)-beta-D-Gal-(1-&gt;4)-beta-D-GlcNAc-(1-&gt;3)-beta-D-Gal-(1-&gt;4)-beta-D-GlcNAc derivative + GDP-beta-L-fucose = an alpha-Neu5Ac-(2-&gt;3)-beta-D-Gal-(1-&gt;4)-beta-D-GlcNAc-(1-&gt;3)-beta-D-Gal-(1-&gt;4)-[alpha-L-Fuc-(1-&gt;3)]-beta-D-GlcNAc derivative + GDP + H(+). It carries out the reaction alpha-N-glycoloylneuraminosyl-(2-&gt;3)-beta-D-galactosyl-(1-&gt;4)-N-acetyl-beta-D-glucosaminyl-(1-&gt;3)-beta-D-galactosyl-(1-&gt;4)-N-acetyl-beta-D-glucosaminyl-(1-&gt;3)-beta-D-galactosyl-(1-&gt;4)-beta-D-glucosyl-(1&lt;-&gt;1')-ceramide + GDP-beta-L-fucose = alpha-N-glycoloylneuraminosyl-(2-&gt;3)-beta-D-galactosyl-(1-&gt;4)-N-acetyl-beta-D-glucosaminyl-(1-&gt;3)-beta-D-galactosyl-(1-&gt;4)-[alpha-L-fucosyl-(1-&gt;3)]-N-acetyl-beta-D-glucosaminyl-(1-&gt;3)-beta-D-galactosyl-(1-&gt;4)-beta-D-glucosyl-(1&lt;-&gt;1')-ceramide + GDP + H(+). The enzyme catalyses alpha-D-galactosyl-(1-&gt;3)-beta-D-galactosyl-(1-&gt;4)-N-acetyl-beta-D-glucosaminyl-(1-&gt;3)-beta-D-galactosyl-(1-&gt;4)-beta-D-glucosyl-(1&lt;-&gt;1')-ceramide + GDP-beta-L-fucose = a neolactoside IV(3)-alpha-Gal,III(3)-alpha-Fuc-nLc4Cer + GDP + H(+). The catalysed reaction is a neolactoside nLc4Cer + GDP-beta-L-fucose = a neolactoside III(3)-alpha-Fuc-nLc4Cer + GDP + H(+). It catalyses the reaction an N-acetyl-alpha-neuraminyl-(2-&gt;3)-beta-D-galactosyl-(1-&gt;4)-N-acetyl-beta-D-glucosaminyl derivative + GDP-beta-L-fucose = an alpha-Neu5Ac-(2-&gt;3)-beta-D-Gal-(1-&gt;4)-[alpha-L-Fuc-(1-&gt;3)]-beta-D-GlcNAc derivative + GDP + H(+). It carries out the reaction beta-D-Gal-(1-&gt;4)-beta-D-GlcNAc-(1-&gt;3)-beta-D-Gal-(1-&gt;4)-D-Glc + GDP-beta-L-fucose = beta-D-Gal-(1-&gt;4)-[alpha-L-Fuc-(1-&gt;3)]-beta-D-GlcNAc-(1-&gt;3)-beta-D-Gal-(1-&gt;4)-D-Glc + GDP + H(+). The enzyme catalyses an alpha-L-Fuc-(1-&gt;2)-beta-D-Gal-(1-&gt;4)-beta-D-GlcNAc derivative + GDP-beta-L-fucose = an alpha-L-Fuc-(1-&gt;2)-beta-D-Gal-(1-&gt;4)-[alpha-L-Fuc-(1-&gt;3)]-beta-D-GlcNAc derivative + GDP + H(+). It functions in the pathway protein modification; protein glycosylation. Its pathway is glycolipid biosynthesis. Activated by Mn2+. In terms of biological role, catalyzes alpha(1-&gt;3) linkage of fucosyl moiety transferred from GDP-beta-L-fucose to N-acetyl glucosamine (GlcNAc) within type 2 lactosamine (LacNAc, beta-D-Gal-(1-&gt;4)-beta-D-GlcNAc-) glycan attached to glycolipids and N- or O-linked glycoproteins. Fucosylates distal type 2 LacNAc and its fucosylated (H-type 2 LacNAc) and sialylated (sialyl-type 2 LacNAc) derivatives to form Lewis x (Lex) (CD15) and Lewis y (Ley) antigenic epitopes involved in cell adhesion and differentiation. Generates Lex epitopes in the brain, presumably playing a role in the maintenance of neuronal stemness and neurite outgrowth in progenitor neural cells. Fucosylates the internal type 2 LacNAc unit of the polylactosamine chain to form VIM-2 antigen that serves as recognition epitope for SELE. Can also modify milk oligosaccharides in particular type 2 tetrasaccharide LNnT. The protein is 4-galactosyl-N-acetylglucosaminide 3-alpha-L-fucosyltransferase 9 of Mus musculus (Mouse).